The sequence spans 706 residues: Protein MAM3 (706 aa).

Topologically, residues 1–16 (MSFLPLRSRSRSGAPH) are vacuolar. Residues 17 to 37 (WVYIILYHIFTIPKIYSLPLL) form a helical membrane-spanning segment. At 38–65 (SGSHVLNSRDVADSGHSVGDEASVTTYY) the chain is on the cytoplasmic side. The CNNM transmembrane domain occupies 57–240 (DEASVTTYYI…MGVERLTKDE (184 aa)). Residues 66–86 (IISIILVLLGGVFAGLTLGLM) traverse the membrane as a helical segment. Residues 87-120 (GQDEVYLKVISTSGSNSEKKLAKRVLDLISRGKH) are Vacuolar-facing. Residues 121-141 (WVLVTLLLSNVITNETLPIVL) form a helical membrane-spanning segment. Over 142–145 (DRCL) the chain is Cytoplasmic. The chain crosses the membrane as a helical span at residues 146–166 (GGGWQAVVSSTILIVIFGEII). At 167 to 177 (PQSVCVKYGLQ) the chain is on the vacuolar side. Residues 178-198 (VGAFFCPFVLVLMYLMYPVAY) form a helical membrane-spanning segment. At 199 to 706 (PIATLLDYML…ANGSSSTIKR (508 aa)) the chain is on the cytoplasmic side. CBS domains lie at 259–320 (MTPI…DCLP) and 321–386 (ISHF…IVDE). 3 disordered regions span residues 421–495 (SHKE…ASNP), 515–540 (ITTHTPHSSKEPSPAPHSNDKSLSAE), and 557–597 (LHTQ…ENQN). Residues 433–445 (ESSPLLSPSNSNH) show a composition bias toward low complexity. Ser-439 and Ser-447 each carry phosphoserine. Positions 472–495 (AVLSPTPQVTEHGTIIPSNLASNP) are enriched in polar residues. Position 527 is a phosphoserine (Ser-527). The span at 566-575 (TQVTTSTKTT) shows a compositional bias: low complexity. Positions 576 to 597 (RNSPDSISIPNSGANHGNENQN) are enriched in polar residues. The residue at position 603 (Ser-603) is a Phosphoserine. The residue at position 604 (Tyr-604) is a Phosphotyrosine. Thr-607 is modified (phosphothreonine). Ser-614 bears the Phosphoserine mark. A disordered region spans residues 626–706 (IGPAKDWDES…ANGSSSTIKR (81 aa)). The span at 630-639 (KDWDESKSEY) shows a compositional bias: basic and acidic residues. The segment covering 658 to 680 (SSSNASLFSSIKNKFKNENANNN) has biased composition (low complexity). Polar residues predominate over residues 681-706 (DRSNFTDSLSRTSNYDANGSSSTIKR).

It belongs to the ACDP family.

It is found in the vacuole membrane. In terms of biological role, involved in metal homeostasis and more specially in manganese sensitivity. The polypeptide is Protein MAM3 (MAM3) (Saccharomyces cerevisiae (strain ATCC 204508 / S288c) (Baker's yeast)).